A 456-amino-acid chain; its full sequence is Probable flavin-containing monoamine oxidase A (456 aa).

Cysteine 394 is subject to S-8alpha-FAD cysteine.

Belongs to the flavin monoamine oxidase family. FAD serves as cofactor.

The catalysed reaction is a secondary aliphatic amine + O2 + H2O = a primary amine + an aldehyde + H2O2. This Dictyostelium discoideum (Social amoeba) protein is Probable flavin-containing monoamine oxidase A (maoA).